Reading from the N-terminus, the 114-residue chain is UPF0342 protein LVIS_1488 (114 aa).

This sequence belongs to the UPF0342 family.

The chain is UPF0342 protein LVIS_1488 from Levilactobacillus brevis (strain ATCC 367 / BCRC 12310 / CIP 105137 / JCM 1170 / LMG 11437 / NCIMB 947 / NCTC 947) (Lactobacillus brevis).